The following is a 394-amino-acid chain: Carbamoyltransferase HypF homolog (394 aa).

Belongs to the carbamoyltransferase HypF family.

This is Carbamoyltransferase HypF homolog (hypF1) from Cupriavidus necator (strain ATCC 17699 / DSM 428 / KCTC 22496 / NCIMB 10442 / H16 / Stanier 337) (Ralstonia eutropha).